A 1481-amino-acid polypeptide reads, in one-letter code: Cystic fibrosis transmembrane conductance regulator (1481 aa).

Residues 1 to 77 (MQKSPLEKAG…KLINALRRCF (77 aa)) are Cytoplasmic-facing. The chain crosses the membrane as a helical span at residues 78–98 (FWRFMFYGILLYLGEVTKAVQ). Residues 81–365 (FMFYGILLYL…WAVQTWYDSL (285 aa)) form the ABC transmembrane type-1 1 domain. Over 99 to 122 (PLLLGRIIASYDPDNKVERSIAIY) the chain is Extracellular. The helical transmembrane segment at 123–146 (LGIGLCLLFVVRTLLLHPAIFGLH) threads the bilayer. Topologically, residues 147-195 (HIGMQMRIAMFSLIYKKTLKLSSRVLDKISIGQLISLLSNNLNKFDEGL) are cytoplasmic. Residues 196-216 (ALAHFVWISPLQVTLLMGLLW) form a helical membrane-spanning segment. Residues 217–222 (ELLQAS) are Extracellular-facing. Residues 223–243 (AFCGLAFLIVLALVQAGLGRM) traverse the membrane as a helical segment. Residues 244-298 (MMKYRDQRAGKINERLVITSEMIENIQSVKAYCWEEAMEKMIENLRQTELKLTRK) lie on the Cytoplasmic side of the membrane. A helical membrane pass occupies residues 299–319 (AAYVRYFNSSAFFFSGFFVVF). At 320-339 (LSVLPYALTKGIILRKIFTT) the chain is on the extracellular side. Residues 340–358 (ISFCIVLRMAVTRQFPWAV) traverse the membrane as a helical segment. The Cytoplasmic portion of the chain corresponds to 359–858 (QTWYDSLGAI…YLRYITVHRS (500 aa)). ATP contacts are provided by residues W401, S434, 458-465 (GSTGAGKT), and Q493. The 224-residue stretch at 423 to 646 (NGDNNLFFSN…RPDFSSKLMG (224 aa)) folds into the ABC transporter 1 domain. Residue C524 is the site of S-palmitoyl cysteine attachment. Residues S549 and S660 each carry the phosphoserine modification. The disordered R region stretch occupies residues 654–831 (SAERRNSILT…EEINEEDLKE (178 aa)). A Phosphoserine; by PKA modification is found at S670. Phosphoserine is present on S686. Residue K688 forms a Glycyl lysine isopeptide (Lys-Gly) (interchain with G-Cter in ubiquitin) linkage. A phosphoserine mark is found at S700 and S712. A Phosphothreonine modification is found at T717. S737, S768, S790, S795, and S813 each carry phosphoserine. Residues 859 to 879 (LIFVLIWCIVIFLAEVAASLV) form a helical membrane-spanning segment. Residues 859 to 1155 (LIFVLIWCIV…AVNSSIDVDS (297 aa)) enclose the ABC transmembrane type-1 2 domain. Residues 880–918 (VLWLFGNTAPQDKENSTKSGNSSYAVIITNTSSYYFFYI) are Extracellular-facing. 3 N-linked (GlcNAc...) asparagine glycosylation sites follow: N894, N900, and N909. The chain crosses the membrane as a discontinuously helical span at residues 919-939 (YVGVADTLLALGLFRGLPLVH). Over 940-990 (TLITVSKILHHKMLHSVLQAPMSTLNTLKAGGILNRFSKDIAILDDLLPLT) the chain is Cytoplasmic. The chain crosses the membrane as a helical span at residues 991 to 1011 (IFDFIQLLLIVVGAIAVVSVL). The Extracellular portion of the chain corresponds to 1012 to 1013 (QP). Residues 1014 to 1034 (YIFLATVPVIAAFILLRAYFL) form a helical membrane-spanning segment. Residues 1035–1095 (HTSQQLKQLE…TANWFLYLST (61 aa)) lie on the Cytoplasmic side of the membrane. A helical membrane pass occupies residues 1096-1116 (LRWFQMRIEMIFVLFFIAVAF). The Extracellular portion of the chain corresponds to 1117-1130 (ISILTTGEGEGRVG). The chain crosses the membrane as a helical span at residues 1131 to 1151 (IILTLAMNIMSTLQWAVNSSI). The Cytoplasmic portion of the chain corresponds to 1152 to 1481 (DVDSLMRSVS…AEEEVQGTRL (330 aa)). The region spanning 1199–1444 (VKKDDVWPSG…KSLFRQAISS (246 aa)) is the ABC transporter 2 domain. Residues Y1220 and 1245 to 1252 (GRTGSGKS) each bind ATP. An interaction with GORASP2 region spans residues 1387-1481 (RTLKQAFADC…AEEEVQGTRL (95 aa)). Residue C1396 is the site of S-palmitoyl cysteine attachment. Phosphoserine is present on residues S1445 and S1457. Residues 1449 to 1481 (KLFPHRNSSKHKSRPQITALKEEAEEEVQGTRL) form a disordered region. The segment covering 1450–1462 (LFPHRNSSKHKSR) has biased composition (basic residues). Over residues 1471-1481 (EAEEEVQGTRL) the composition is skewed to acidic residues. Residues 1479-1481 (TRL) carry the PDZ-binding motif.

This sequence belongs to the ABC transporter superfamily. ABCC family. CFTR transporter (TC 3.A.1.202) subfamily. As to quaternary structure, monomer; does not require oligomerization for channel activity. May form oligomers in the membrane. Interacts with SLC26A3, SLC26A6 and NHERF1. Interacts with SHANK2. Interacts with MYO6. Interacts (via C-terminus) with GOPC (via PDZ domain); this promotes CFTR internalization and thereby decreases channel activity. Interacts with SLC4A7 through NHERF1. Found in a complex with MYO5B and RAB11A. Interacts with ANO1. Interacts with SLC26A8. Interacts with AHCYL1; the interaction increases CFTR activity. Interacts with CSE1L. The core-glycosylated form interacts with GORASP2 (via PDZ GRASP-type 1 domain) in respone to ER stress. Interacts with MARCHF2; the interaction leads to CFTR ubiqtuitination and degradation. Interacts with ADGRG2. In terms of processing, N-glycosylated. Phosphorylated; cAMP treatment promotes phosphorylation and activates the channel. Dephosphorylation decreases the ATPase activity (in vitro). Phosphorylation at PKA sites activates the channel. Phosphorylation at PKC sites enhances the response to phosphorylation by PKA. Phosphorylated by AMPK; this inhibits channel activity. Post-translationally, ubiquitinated, leading to its degradation in the lysosome. Deubiquitination by USP10 in early endosomes enhances its endocytic recycling to the cell membrane. Ubiquitinated by RNF185 during ER stress. Ubiquitinated by MARCHF2. Isoform 1 is expressed in the pancreas. Isoform 2 is specifically expressed in the ventricle.

It is found in the apical cell membrane. The protein localises to the early endosome membrane. It localises to the cell membrane. The protein resides in the recycling endosome membrane. Its subcellular location is the endoplasmic reticulum membrane. It is found in the nucleus. The enzyme catalyses ATP + H2O + closed Cl(-) channel = ADP + phosphate + open Cl(-) channel.. It carries out the reaction chloride(in) = chloride(out). The catalysed reaction is hydrogencarbonate(in) = hydrogencarbonate(out). It catalyses the reaction ATP + H2O = ADP + phosphate + H(+). Functionally, epithelial ion channel that plays an important role in the regulation of epithelial ion and water transport and fluid homeostasis. Mediates the transport of chloride ions across the cell membrane. Possesses an intrinsic ATPase activity and utilizes ATP to gate its channel; the passive flow of anions through the channel is gated by cycles of ATP binding and hydrolysis by the ATP-binding domains. The ion channel is also permeable to HCO(3)(-); selectivity depends on the extracellular chloride concentration. Exerts its function also by modulating the activity of other ion channels and transporters. Contributes to the regulation of the pH and the ion content of the epithelial fluid layer. Modulates the activity of the epithelial sodium channel (ENaC) complex, in part by regulating the cell surface expression of the ENaC complex. May regulate bicarbonate secretion and salvage in epithelial cells by regulating the transporter SLC4A7. Can inhibit the chloride channel activity of ANO1. Plays a role in the chloride and bicarbonate homeostasis during sperm epididymal maturation and capacitation. This chain is Cystic fibrosis transmembrane conductance regulator, found in Oryctolagus cuniculus (Rabbit).